The primary structure comprises 724 residues: Catalase-peroxidase (724 aa).

Residues 1 to 20 (MDENKTKPAGKCPVMHGGNT) form a disordered region. The tryptophyl-tyrosyl-methioninium (Trp-Tyr) (with M-251) cross-link spans 98 to 225 (WHSAGTYRTA…LAAVQMGLIY (128 aa)). The Proton acceptor role is filled by His99. Residues 225–251 (YVNPEGVDGNPDPLRTAQDMRVTFSRM) constitute a cross-link (tryptophyl-tyrosyl-methioninium (Tyr-Met) (with W-98)). His266 is a heme b binding site.

This sequence belongs to the peroxidase family. Peroxidase/catalase subfamily. Homodimer or homotetramer. Heme b is required as a cofactor. Formation of the three residue Trp-Tyr-Met cross-link is important for the catalase, but not the peroxidase activity of the enzyme.

It carries out the reaction H2O2 + AH2 = A + 2 H2O. The catalysed reaction is 2 H2O2 = O2 + 2 H2O. Bifunctional enzyme with both catalase and broad-spectrum peroxidase activity. The protein is Catalase-peroxidase of Pectobacterium carotovorum subsp. carotovorum (strain PC1).